The following is a 286-amino-acid chain: Shikimate dehydrogenase (NADP(+)) (286 aa).

Residues 19-21 (SLS) and threonine 66 each bind shikimate. Catalysis depends on lysine 70, which acts as the Proton acceptor. Shikimate-binding residues include asparagine 91 and aspartate 107. Residues 129–133 (GSGGA) and leucine 229 each bind NADP(+). A shikimate-binding site is contributed by tyrosine 231. An NADP(+)-binding site is contributed by glycine 252.

The protein belongs to the shikimate dehydrogenase family. As to quaternary structure, homodimer.

It catalyses the reaction shikimate + NADP(+) = 3-dehydroshikimate + NADPH + H(+). It functions in the pathway metabolic intermediate biosynthesis; chorismate biosynthesis; chorismate from D-erythrose 4-phosphate and phosphoenolpyruvate: step 4/7. Its function is as follows. Involved in the biosynthesis of the chorismate, which leads to the biosynthesis of aromatic amino acids. Catalyzes the reversible NADPH linked reduction of 3-dehydroshikimate (DHSA) to yield shikimate (SA). The protein is Shikimate dehydrogenase (NADP(+)) of Prochlorococcus marinus (strain MIT 9312).